Consider the following 129-residue polypeptide: uncharacterized protein (129 aa).

Residues 33 to 50 (MGGNVMWFIALLFALLIA) traverse the membrane as a helical segment.

The protein resides in the membrane. This is an uncharacterized protein from Saccharomyces cerevisiae (strain ATCC 204508 / S288c) (Baker's yeast).